The primary structure comprises 140 residues: Arsenate reductase ArsI2 (140 aa).

Residue Cys10 is the Nucleophile; cysteine thioarsenate intermediate of the active site.

This sequence belongs to the ArsC family.

It catalyses the reaction [glutaredoxin]-dithiol + arsenate + glutathione + H(+) = glutathionyl-S-S-[glutaredoxin] + arsenite + H2O. Its function is as follows. Catalyzes the reduction of arsenate [As(V)] to arsenite [As(III)]. Does not constitute the major arsenate reductase in cells: essential only in the absence of ArsC (AC P74313). This chain is Arsenate reductase ArsI2, found in Synechocystis sp. (strain ATCC 27184 / PCC 6803 / Kazusa).